A 555-amino-acid polypeptide reads, in one-letter code: Probable beta-glucosidase btgE (555 aa).

Positions 1 to 18 are cleaved as a signal peptide; that stretch reads MRGAILATAAAFAGTAVA. Disordered regions lie at residues 92–114 and 263–290; these read TSSA…VTLP and TTSA…PTGA. Over residues 263-288 the composition is skewed to low complexity; it reads TTSAASTTTAVPSSSTTTSSATSVPT. Glu-392 (proton donor) is an active-site residue. The active-site Nucleophile is Glu-488.

This sequence belongs to the glycosyl hydrolase 17 family.

It is found in the secreted. Its subcellular location is the cell wall. The enzyme catalyses Hydrolysis of terminal, non-reducing beta-D-glucosyl residues with release of beta-D-glucose.. It participates in glycan metabolism; cellulose degradation. Functionally, beta-glucosidases are one of a number of cellulolytic enzymes involved in the degradation of cellulosic biomass. Catalyzes the last step releasing glucose from the inhibitory cellobiose. This chain is Probable beta-glucosidase btgE (btgE), found in Emericella nidulans (strain FGSC A4 / ATCC 38163 / CBS 112.46 / NRRL 194 / M139) (Aspergillus nidulans).